The chain runs to 481 residues: Phosphoglycerate kinase, chloroplastic (481 aa).

The transit peptide at 1–75 directs the protein to the chloroplast; it reads MASATASHTL…SSKPIRGVAS (75 aa). The (2R)-3-phosphoglycerate site is built by alanine 98, aspartate 99, asparagine 101, arginine 115, serine 137, histidine 138, glycine 140, arginine 141, arginine 196, histidine 228, and arginine 229. Glycine 274 is an ADP binding site. Residue glycine 274 coordinates CDP. AMP-binding residues include lysine 276 and lysine 280. ATP is bound at residue lysine 280. Position 298 (glycine 298) interacts with ADP. Residue glycine 298 participates in CDP binding. The AMP site is built by glycine 299 and glycine 371. The ATP site is built by glycine 299 and glycine 371. The CDP site is built by glycine 396 and phenylalanine 401. Phenylalanine 401 contributes to the ADP binding site. Position 402 (glutamate 402) interacts with AMP. ATP contacts are provided by glutamate 402, aspartate 433, and serine 434. Aspartate 433 contributes to the Mg(2+) binding site.

It belongs to the phosphoglycerate kinase family. As to quaternary structure, monomer. Mg(2+) is required as a cofactor.

The protein localises to the plastid. Its subcellular location is the chloroplast. It carries out the reaction (2R)-3-phosphoglycerate + ATP = (2R)-3-phospho-glyceroyl phosphate + ADP. The protein operates within carbohydrate biosynthesis; Calvin cycle. In Nicotiana tabacum (Common tobacco), this protein is Phosphoglycerate kinase, chloroplastic.